The following is a 157-amino-acid chain: Small ribosomal subunit protein uS7 (157 aa).

Belongs to the universal ribosomal protein uS7 family. Part of the 30S ribosomal subunit. Contacts proteins S9 and S11.

Its function is as follows. One of the primary rRNA binding proteins, it binds directly to 16S rRNA where it nucleates assembly of the head domain of the 30S subunit. Is located at the subunit interface close to the decoding center, probably blocks exit of the E-site tRNA. In Borrelia duttonii (strain Ly), this protein is Small ribosomal subunit protein uS7.